A 210-amino-acid chain; its full sequence is Probable high-affinity nitrate transporter-activating protein 2.2 (210 aa).

The first 23 residues, 1 to 23 (MARFGAVIHRVFLPLLLLLVVLG), serve as a signal peptide directing secretion. Residues 182-202 (IEVAAGVLSAFSVAALAVFLV) traverse the membrane as a helical segment.

The protein belongs to the NAR2 family.

It is found in the cell membrane. Involved in nitrate transport. The chain is Probable high-affinity nitrate transporter-activating protein 2.2 (NAR2.2) from Oryza sativa subsp. japonica (Rice).